A 278-amino-acid polypeptide reads, in one-letter code: Probable endonuclease 4 (278 aa).

Positions 67, 107, 141, 173, 176, 210, 223, 225, and 255 each coordinate Zn(2+).

It belongs to the AP endonuclease 2 family. Zn(2+) is required as a cofactor.

It carries out the reaction Endonucleolytic cleavage to 5'-phosphooligonucleotide end-products.. In terms of biological role, endonuclease IV plays a role in DNA repair. It cleaves phosphodiester bonds at apurinic or apyrimidinic (AP) sites, generating a 3'-hydroxyl group and a 5'-terminal sugar phosphate. This Natronomonas pharaonis (strain ATCC 35678 / DSM 2160 / CIP 103997 / JCM 8858 / NBRC 14720 / NCIMB 2260 / Gabara) (Halobacterium pharaonis) protein is Probable endonuclease 4.